Here is a 150-residue protein sequence, read N- to C-terminus: Cytochrome c oxidase subunit 5A, mitochondrial (150 aa).

The transit peptide at Met-1 to Tyr-41 directs the protein to the mitochondrion. The short motif at Leu-2–Ala-17 is the SIFI-degron element. An N6-acetyllysine mark is found at Lys-87 and Lys-113. Thr-141 bears the Phosphothreonine mark.

Belongs to the cytochrome c oxidase subunit 5A family. As to quaternary structure, component of the cytochrome c oxidase (complex IV, CIV), a multisubunit enzyme composed of 14 subunits. The complex is composed of a catalytic core of 3 subunits MT-CO1, MT-CO2 and MT-CO3, encoded in the mitochondrial DNA, and 11 supernumerary subunits COX4I, COX5A, COX5B, COX6A, COX6B, COX6C, COX7A, COX7B, COX7C, COX8 and NDUFA4, which are encoded in the nuclear genome. The complex exists as a monomer or a dimer and forms supercomplexes (SCs) in the inner mitochondrial membrane with NADH-ubiquinone oxidoreductase (complex I, CI) and ubiquinol-cytochrome c oxidoreductase (cytochrome b-c1 complex, complex III, CIII), resulting in different assemblies (supercomplex SCI(1)III(2)IV(1) and megacomplex MCI(2)III(2)IV(2)). Interacts with AFG1L. Interacts with RAB5IF. In response to mitochondrial stress, the precursor protein is ubiquitinated by the SIFI complex in the cytoplasm before mitochondrial import, leading to its degradation. Within the SIFI complex, UBR4 initiates ubiquitin chain that are further elongated or branched by KCMF1.

It is found in the mitochondrion inner membrane. It participates in energy metabolism; oxidative phosphorylation. In terms of biological role, component of the cytochrome c oxidase, the last enzyme in the mitochondrial electron transport chain which drives oxidative phosphorylation. The respiratory chain contains 3 multisubunit complexes succinate dehydrogenase (complex II, CII), ubiquinol-cytochrome c oxidoreductase (cytochrome b-c1 complex, complex III, CIII) and cytochrome c oxidase (complex IV, CIV), that cooperate to transfer electrons derived from NADH and succinate to molecular oxygen, creating an electrochemical gradient over the inner membrane that drives transmembrane transport and the ATP synthase. Cytochrome c oxidase is the component of the respiratory chain that catalyzes the reduction of oxygen to water. Electrons originating from reduced cytochrome c in the intermembrane space (IMS) are transferred via the dinuclear copper A center (CU(A)) of subunit 2 and heme A of subunit 1 to the active site in subunit 1, a binuclear center (BNC) formed by heme A3 and copper B (CU(B)). The BNC reduces molecular oxygen to 2 water molecules using 4 electrons from cytochrome c in the IMS and 4 protons from the mitochondrial matrix. In Saguinus labiatus (Red-chested mustached tamarin), this protein is Cytochrome c oxidase subunit 5A, mitochondrial (COX5A).